Reading from the N-terminus, the 379-residue chain is Chaperone protein DnaJ (379 aa).

A J domain is found at 5–69 (EYYERLGVDK…QKRAAYDQYG (65 aa)). The CR-type zinc finger occupies 141-223 (GVEKQVKYNR…CHGSGHEKVA (83 aa)). Zn(2+) is bound by residues cysteine 154, cysteine 157, cysteine 171, cysteine 174, cysteine 197, cysteine 200, and cysteine 214. 4 CXXCXGXG motif repeats span residues 154 to 161 (CHTCGGSG), 171 to 178 (CHKCGGRG), 197 to 204 (CDVCHGTG), and 211 to 218 (STTCHGSG).

Belongs to the DnaJ family. Homodimer. Zn(2+) is required as a cofactor.

It is found in the cytoplasm. Functionally, participates actively in the response to hyperosmotic and heat shock by preventing the aggregation of stress-denatured proteins and by disaggregating proteins, also in an autonomous, DnaK-independent fashion. Unfolded proteins bind initially to DnaJ; upon interaction with the DnaJ-bound protein, DnaK hydrolyzes its bound ATP, resulting in the formation of a stable complex. GrpE releases ADP from DnaK; ATP binding to DnaK triggers the release of the substrate protein, thus completing the reaction cycle. Several rounds of ATP-dependent interactions between DnaJ, DnaK and GrpE are required for fully efficient folding. Also involved, together with DnaK and GrpE, in the DNA replication of plasmids through activation of initiation proteins. In Lactococcus lactis subsp. cremoris (Streptococcus cremoris), this protein is Chaperone protein DnaJ.